The chain runs to 192 residues: Probable nicotinate-nucleotide adenylyltransferase (192 aa).

This sequence belongs to the NadD family.

The catalysed reaction is nicotinate beta-D-ribonucleotide + ATP + H(+) = deamido-NAD(+) + diphosphate. The protein operates within cofactor biosynthesis; NAD(+) biosynthesis; deamido-NAD(+) from nicotinate D-ribonucleotide: step 1/1. Its function is as follows. Catalyzes the reversible adenylation of nicotinate mononucleotide (NaMN) to nicotinic acid adenine dinucleotide (NaAD). The protein is Probable nicotinate-nucleotide adenylyltransferase of Shouchella clausii (strain KSM-K16) (Alkalihalobacillus clausii).